The sequence spans 367 residues: Outer membrane protein assembly factor BamC (367 aa).

Residues 1 to 16 (MRLLPLFLMVTLAASG) form the signal peptide. The N-palmitoyl cysteine moiety is linked to residue cysteine 17. Residue cysteine 17 is the site of S-diacylglycerol cysteine attachment.

Belongs to the BamC family. In terms of assembly, part of the Bam complex.

It is found in the cell outer membrane. Functionally, part of the outer membrane protein assembly complex, which is involved in assembly and insertion of beta-barrel proteins into the outer membrane. The polypeptide is Outer membrane protein assembly factor BamC (Thiobacillus denitrificans (strain ATCC 25259 / T1)).